The primary structure comprises 358 residues: MSNQVSLVDDIISEYQGIEMQMADPEVAGDQSQFRKLSKRYAELRPIVAVNEELVQARQDLADAKEMAYEDHEFQSEVDRLEPLVVQLEEQLADLLAPRDEHDSEDIIMEIKAGAGGEEAALFAGDLARMYERFADKAGFQWEVLGLNESDLGGVKDMSISFKSKTPSRDGAWSVFKFEGGVHRVQRVPVTESQGRIQTSAAGVLVYPEPEEIDSVNIDDKDIRVDVYRSSGKGGQGVNTTDSAVRITHLPTGLVVTCQKERSQIQNKARALQVLQARLDQMEREAREAEAGEQRASQVRTMDRSERIRTYNWPENRITDHRIGYKANNLDSVLDGDMQDLIEALQAQERAERLEAEG.

Residue Gln236 is modified to N5-methylglutamine.

It belongs to the prokaryotic/mitochondrial release factor family. Methylated by PrmC. Methylation increases the termination efficiency of RF1.

Its subcellular location is the cytoplasm. In terms of biological role, peptide chain release factor 1 directs the termination of translation in response to the peptide chain termination codons UAG and UAA. This is Peptide chain release factor 1 from Corynebacterium aurimucosum (strain ATCC 700975 / DSM 44827 / CIP 107346 / CN-1) (Corynebacterium nigricans).